The following is a 355-amino-acid chain: Anthocyanin synthase (355 aa).

Residues Tyr145 and Lys216 each coordinate substrate. The Fe2OG dioxygenase domain occupies 211–310 (LLLQMKINYY…RISWAVFCEP (100 aa)). 218–220 (NYY) contacts 2-oxoglutarate. His235 is a binding site for Fe cation. Thr236 is a substrate binding site. Asp237 and His291 together coordinate Fe cation. 2-oxoglutarate is bound by residues Arg301 and 301–303 (RIS). Substrate contacts are provided by Glu309 and Lys344.

Belongs to the iron/ascorbate-dependent oxidoreductase family. The cofactor is L-ascorbate. Requires Fe(2+) as cofactor. Expressed in stems and leaves. Expressed at low levels in ovaries.

The enzyme catalyses a (2R,3S,4S)-leucoanthocyanidin + 2-oxoglutarate + O2 = a 4-H-anthocyanidin with a 3-hydroxy group + succinate + CO2 + 2 H2O. It functions in the pathway pigment biosynthesis; anthocyanin biosynthesis. Functionally, involved in anthocyanin biosynthesis by catalyzing the oxidation of leucoanthocyanidins into anthocyanidins. Required for the accumulation of anthocyanin in red-fleshed kiwifruit varieties. The protein is Anthocyanin synthase of Actinidia chinensis var. chinensis (Chinese soft-hair kiwi).